A 976-amino-acid polypeptide reads, in one-letter code: Peptidylglycine alpha-amidating monooxygenase (976 aa).

An N-terminal signal peptide occupies residues 1 to 25 (MAGRARSGLLLLLLGLLALQSSCLA). Residues 1 to 497 (MAGRARSGLL…EGPWEPEPSG (497 aa)) form a peptidylglycine alpha-hydroxylating monooxygenase region. Positions 26-35 (FRSPLSVFKR) are excised as a propeptide. Over 36 to 866 (FKETTRSFSN…QKLSTEPGSG (831 aa)) the chain is Intragranular. 5 cysteine pairs are disulfide-bonded: C47–C186, C81–C126, C114–C131, C227–C334, and C293–C315. Positions 107 and 108 each coordinate Cu(2+). Cu(2+)-binding residues include H172, H242, H244, and M314. Residues 498-820 (DFHVEEELDW…LTEKMEHRSV (323 aa)) are peptidyl-alpha-hydroxyglycine alpha-amidating lyase. NHL repeat units lie at residues 501 to 544 (VEEE…NSFD), 570 to 611 (AEIL…LDPH), 620 to 665 (LGRS…FSPS), and 673 to 717 (GEES…FKTD). Ca(2+) is bound at residue V520. R533 provides a ligand contact to a protein. H585 is a Zn(2+) binding site. L587 provides a ligand contact to Ca(2+). An intrachain disulfide couples C634 to C655. An a protein-binding site is contributed by Y654. H690 lines the Zn(2+) pocket. A disulfide bond links C702 and C713. R706 is an a protein binding site. N765 carries an N-linked (GlcNAc...) asparagine glycan. An NHL 5 repeat occupies 769–812 (GEIIDVFKPVRKHFDMPHDIVASEDGTVYIGDAHTNTVWKFTLT). Residue V774 is modified to Sulfotyrosine. Position 786 (H786) interacts with Zn(2+). D787 provides a ligand contact to Ca(2+). E792 is subject to Sulfotyrosine. A helical membrane pass occupies residues 867–890 (VSVVLITTLLVIPVLVLLAIVMFI). The Cytoplasmic segment spans residues 891–976 (RWKKSRAFGD…APLPKPAPSS (86 aa)). Residues S921, S932, and S945 each carry the phosphoserine modification. The interaction with RASSF9 stretch occupies residues 928–945 (NFFASRKGYSRKGFDRVS). Positions 940-976 (GFDRVSTEGSDQEKDEDDGTESEEEYSAPLPKPAPSS) are disordered. T946 bears the Phosphothreonine mark. S949 is modified (phosphoserine). The segment covering 952-965 (EKDEDDGTESEEEY) has biased composition (acidic residues). Position 959 is a phosphothreonine (T959). At S961 the chain carries Phosphoserine.

In the C-terminal section; belongs to the peptidyl-alpha-hydroxyglycine alpha-amidating lyase family. This sequence in the N-terminal section; belongs to the copper type II ascorbate-dependent monooxygenase family. Monomer. Interacts with RASSF9. It depends on Zn(2+) as a cofactor. Cu(2+) serves as cofactor.

It localises to the cytoplasmic vesicle. It is found in the secretory vesicle membrane. The protein localises to the membrane. The protein resides in the secreted. The catalysed reaction is a [peptide]-C-terminal glycine + 2 L-ascorbate + O2 = a [peptide]-C-terminal (2S)-2-hydroxyglycine + 2 monodehydro-L-ascorbate radical + H2O. It catalyses the reaction a [peptide]-C-terminal (2S)-2-hydroxyglycine = a [peptide]-C-terminal amide + glyoxylate. The enzyme catalyses N-dodecanoylglycine + 2 L-ascorbate + O2 = N-dodecanoyl-(2S)-hydroxyglycine + 2 monodehydro-L-ascorbate radical + H2O. It carries out the reaction N-dodecanoyl-(2S)-hydroxyglycine = dodecanamide + glyoxylate. The catalysed reaction is N-(9Z,12Z,15Z)-octadecatrienoylglycine + 2 L-ascorbate + O2 = N-(9Z,12Z,15Z)-octadecatrienoyl-(2S)-hydroxyglycine + 2 monodehydro-L-ascorbate radical + H2O. It catalyses the reaction N-(9Z,12Z,15Z)-octadecatrienoyl-(2S)-hydroxyglycine = (9Z,12Z,15Z)-octadecatrienamide + glyoxylate. The enzyme catalyses N-(9Z-octadecenoyl)glycine + 2 L-ascorbate + O2 = N-(9Z-octadecenoyl)-(2S)-hydroxyglycine + 2 monodehydro-L-ascorbate radical + H2O. It carries out the reaction N-(9Z-octadecenoyl)-(2S)-hydroxyglycine = (9Z)-octadecenamide + glyoxylate. The catalysed reaction is N-tetradecanoylglycine + 2 L-ascorbate + O2 = N-tetradecanoyl-(2S)-hydroxyglycine + 2 monodehydro-L-ascorbate radical + H2O. It catalyses the reaction N-tetradecanoyl-(2S)-hydroxyglycine = tetradecamide + glyoxylate. The enzyme catalyses N-decanoylglycine + 2 L-ascorbate + O2 = N-decanoyl-(2S)-hydroxyglycine + 2 monodehydro-L-ascorbate radical + H2O. It carries out the reaction N-decanoyl-(2S)-hydroxyglycine = decanamide + glyoxylate. The catalysed reaction is N-octanoylglycine + 2 L-ascorbate + O2 = N-octanoyl-(2S)-hydroxyglycine + 2 monodehydro-L-ascorbate radical + H2O. It catalyses the reaction N-octanoyl-(2S)-hydroxyglycine = octanamide + glyoxylate. Its activity is regulated as follows. PAM activity is inhibited by EDTA, phenylglyoxal and diethyl pyrocarbonate. PAL activity is stimulated by cadmium and inhibited by mercury. Functionally, bifunctional enzyme that catalyzes amidation of the C-terminus of proteins. Alpha-amidation is present at the C-terminus of many endocrine hormones and neuropeptides and is required for their activity. C-terminal amidation also takes place in response to protein fragmentation triggered by oxidative stress, promoting degradation of amidated protein fragments by the proteasome. Alpha-amidation involves two sequential reactions, both of which are catalyzed by separate catalytic domains of the enzyme. The first step, catalyzed by peptidyl alpha-hydroxylating monooxygenase (PHM) domain, is the copper-, ascorbate-, and O2- dependent stereospecific hydroxylation (with S stereochemistry) at the alpha-carbon (C-alpha) of the C-terminal glycine of the peptidylglycine substrate. The second step, catalyzed by the peptidylglycine amidoglycolate lyase (PAL) domain, is the zinc-dependent cleavage of the N-C-alpha bond, producing the alpha-amidated peptide and glyoxylate. Similarly, catalyzes the two-step conversion of an N-fatty acylglycine to a primary fatty acid amide and glyoxylate. The polypeptide is Peptidylglycine alpha-amidating monooxygenase (Rattus norvegicus (Rat)).